An 817-amino-acid chain; its full sequence is Transcription factor yanR (817 aa).

The segment at residues 19–46 (CIVCRRRKVRCGREHPECANCVRMKENC) is a DNA-binding region (zn(2)-C6 fungal-type). 3 disordered regions span residues 102–161 (GNVL…PQVD), 180–218 (HHASSRAGTSRTSSVSQDASPAVSESARAPSTSTSYSGL), and 733–775 (SLSS…VADS). The span at 113-127 (LPRPTISPASAPPPQ) shows a compositional bias: pro residues. Positions 146–158 (SSTILTPAPSSHP) are enriched in polar residues. Low complexity predominate over residues 184 to 195 (SRAGTSRTSSVS). 2 stretches are compositionally biased toward polar residues: residues 208–217 (APSTSTSYSG) and 748–760 (EAPSTTTAPQMPS).

The protein localises to the nucleus. In terms of biological role, transcription factor that regulates the expression of the gene cluster that mediates the biosynthesis of yanuthone D, a fungal isoprenoid epoxycyclohexenone that acts as an antibiotic against fungi and bacteria. In Aspergillus niger (strain ATCC 1015 / CBS 113.46 / FGSC A1144 / LSHB Ac4 / NCTC 3858a / NRRL 328 / USDA 3528.7), this protein is Transcription factor yanR.